Here is a 544-residue protein sequence, read N- to C-terminus: Exodeoxyribonuclease 7 large subunit (544 aa).

A disordered region spans residues 522 to 544; it reads PETPPKSRKADNPPEPPEQTSFL.

This sequence belongs to the XseA family. In terms of assembly, heterooligomer composed of large and small subunits.

Its subcellular location is the cytoplasm. The enzyme catalyses Exonucleolytic cleavage in either 5'- to 3'- or 3'- to 5'-direction to yield nucleoside 5'-phosphates.. Its function is as follows. Bidirectionally degrades single-stranded DNA into large acid-insoluble oligonucleotides, which are then degraded further into small acid-soluble oligonucleotides. This is Exodeoxyribonuclease 7 large subunit from Zymomonas mobilis subsp. mobilis (strain ATCC 31821 / ZM4 / CP4).